We begin with the raw amino-acid sequence, 620 residues long: 1-deoxy-D-xylulose-5-phosphate synthase (620 aa).

Thiamine diphosphate is bound by residues histidine 80 and 121–123 (GHS). Residue aspartate 152 participates in Mg(2+) binding. Thiamine diphosphate is bound by residues 153–154 (GA), asparagine 181, tyrosine 288, and glutamate 370. Asparagine 181 serves as a coordination point for Mg(2+).

The protein belongs to the transketolase family. DXPS subfamily. Homodimer. The cofactor is Mg(2+). Thiamine diphosphate is required as a cofactor.

The catalysed reaction is D-glyceraldehyde 3-phosphate + pyruvate + H(+) = 1-deoxy-D-xylulose 5-phosphate + CO2. It participates in metabolic intermediate biosynthesis; 1-deoxy-D-xylulose 5-phosphate biosynthesis; 1-deoxy-D-xylulose 5-phosphate from D-glyceraldehyde 3-phosphate and pyruvate: step 1/1. Functionally, catalyzes the acyloin condensation reaction between C atoms 2 and 3 of pyruvate and glyceraldehyde 3-phosphate to yield 1-deoxy-D-xylulose-5-phosphate (DXP). The protein is 1-deoxy-D-xylulose-5-phosphate synthase of Sodalis glossinidius (strain morsitans).